The following is a 161-amino-acid chain: Putative esterase C31F10.02 (161 aa).

The protein belongs to the thioesterase PaaI family.

The polypeptide is Putative esterase C31F10.02 (Schizosaccharomyces pombe (strain 972 / ATCC 24843) (Fission yeast)).